The sequence spans 294 residues: Cytidine deaminase (294 aa).

CMP/dCMP-type deaminase domains are found at residues 48–168 (DDDA…FGPT) and 187–294 (AETD…RVTF). 89 to 91 (NME) lines the substrate pocket. Residue His-102 participates in Zn(2+) binding. The active-site Proton donor is Glu-104. 2 residues coordinate Zn(2+): Cys-129 and Cys-132.

The protein belongs to the cytidine and deoxycytidylate deaminase family. In terms of assembly, homodimer. The cofactor is Zn(2+).

The enzyme catalyses cytidine + H2O + H(+) = uridine + NH4(+). The catalysed reaction is 2'-deoxycytidine + H2O + H(+) = 2'-deoxyuridine + NH4(+). In terms of biological role, this enzyme scavenges exogenous and endogenous cytidine and 2'-deoxycytidine for UMP synthesis. The sequence is that of Cytidine deaminase from Yersinia pseudotuberculosis serotype IB (strain PB1/+).